A 316-amino-acid polypeptide reads, in one-letter code: Coiled-coil domain-containing protein 42 (316 aa).

Coiled-coil stretches lie at residues S39–L146 and L178–R232.

This sequence belongs to the CFAP73 family. Interacts with ODF1 and ODF2. Interacts with CCDC38. Interacts with CCDC146. Interacts with CFAP53.

It localises to the cytoplasm. It is found in the perinuclear region. The protein resides in the cytoskeleton. Its subcellular location is the cell projection. The protein localises to the cilium. It localises to the flagellum. It is found in the microtubule organizing center. The protein resides in the centrosome. Essential for male fertility. Required for sperm development. This chain is Coiled-coil domain-containing protein 42, found in Homo sapiens (Human).